A 509-amino-acid chain; its full sequence is ATP synthase subunit alpha (509 aa).

An ATP-binding site is contributed by 169 to 176 (GDRQTGKT).

Belongs to the ATPase alpha/beta chains family. As to quaternary structure, F-type ATPases have 2 components, CF(1) - the catalytic core - and CF(0) - the membrane proton channel. CF(1) has five subunits: alpha(3), beta(3), gamma(1), delta(1), epsilon(1). CF(0) has three main subunits: a(1), b(2) and c(9-12). The alpha and beta chains form an alternating ring which encloses part of the gamma chain. CF(1) is attached to CF(0) by a central stalk formed by the gamma and epsilon chains, while a peripheral stalk is formed by the delta and b chains.

The protein resides in the cell inner membrane. It carries out the reaction ATP + H2O + 4 H(+)(in) = ADP + phosphate + 5 H(+)(out). Its function is as follows. Produces ATP from ADP in the presence of a proton gradient across the membrane. The alpha chain is a regulatory subunit. The sequence is that of ATP synthase subunit alpha from Methylobacterium nodulans (strain LMG 21967 / CNCM I-2342 / ORS 2060).